A 42-amino-acid chain; its full sequence is Small protein MntS (42 aa).

Its subcellular location is the cytoplasm. Required for repression of mntH by MntR. May function as a chaperone that makes manganese more available by delivering it to the necessary cellular locations when manganese is limiting. In Escherichia coli (strain K12), this protein is Small protein MntS (mntS).